The sequence spans 596 residues: Elongation factor 4 (596 aa).

The region spanning 2-184 (KNIRNFAIIA…SIVKYIPPPE (183 aa)) is the tr-type G domain. Residues 14-19 (DHGKST) and 131-134 (NKID) each bind GTP.

It belongs to the TRAFAC class translation factor GTPase superfamily. Classic translation factor GTPase family. LepA subfamily.

It is found in the cell inner membrane. It carries out the reaction GTP + H2O = GDP + phosphate + H(+). Its function is as follows. Required for accurate and efficient protein synthesis under certain stress conditions. May act as a fidelity factor of the translation reaction, by catalyzing a one-codon backward translocation of tRNAs on improperly translocated ribosomes. Back-translocation proceeds from a post-translocation (POST) complex to a pre-translocation (PRE) complex, thus giving elongation factor G a second chance to translocate the tRNAs correctly. Binds to ribosomes in a GTP-dependent manner. This chain is Elongation factor 4, found in Neorickettsia sennetsu (strain ATCC VR-367 / Miyayama) (Ehrlichia sennetsu).